A 314-amino-acid chain; its full sequence is Methionyl-tRNA formyltransferase (314 aa).

Position 109 to 112 (109 to 112 (SVLP)) interacts with (6S)-5,6,7,8-tetrahydrofolate.

This sequence belongs to the Fmt family.

The enzyme catalyses L-methionyl-tRNA(fMet) + (6R)-10-formyltetrahydrofolate = N-formyl-L-methionyl-tRNA(fMet) + (6S)-5,6,7,8-tetrahydrofolate + H(+). Attaches a formyl group to the free amino group of methionyl-tRNA(fMet). The formyl group appears to play a dual role in the initiator identity of N-formylmethionyl-tRNA by promoting its recognition by IF2 and preventing the misappropriation of this tRNA by the elongation apparatus. This is Methionyl-tRNA formyltransferase from Dictyoglomus turgidum (strain DSM 6724 / Z-1310).